The primary structure comprises 363 residues: 3-isopropylmalate dehydrogenase (363 aa).

G78 to E91 serves as a coordination point for NAD(+). The substrate site is built by R99, R109, R138, and D227. Mg(2+) contacts are provided by D227, D251, and D255. G285 to N297 serves as a coordination point for NAD(+).

It belongs to the isocitrate and isopropylmalate dehydrogenases family. LeuB type 1 subfamily. In terms of assembly, homodimer. It depends on Mg(2+) as a cofactor. Mn(2+) serves as cofactor.

The protein resides in the cytoplasm. The enzyme catalyses (2R,3S)-3-isopropylmalate + NAD(+) = 4-methyl-2-oxopentanoate + CO2 + NADH. It participates in amino-acid biosynthesis; L-leucine biosynthesis; L-leucine from 3-methyl-2-oxobutanoate: step 3/4. In terms of biological role, catalyzes the oxidation of 3-carboxy-2-hydroxy-4-methylpentanoate (3-isopropylmalate) to 3-carboxy-4-methyl-2-oxopentanoate. The product decarboxylates to 4-methyl-2 oxopentanoate. This is 3-isopropylmalate dehydrogenase from Buchnera aphidicola subsp. Uroleucon helianthicola.